A 168-amino-acid polypeptide reads, in one-letter code: SsrA-binding protein (168 aa).

The interval methionine 1–isoleucine 20 is disordered.

It belongs to the SmpB family.

Its subcellular location is the cytoplasm. Functionally, required for rescue of stalled ribosomes mediated by trans-translation. Binds to transfer-messenger RNA (tmRNA), required for stable association of tmRNA with ribosomes. tmRNA and SmpB together mimic tRNA shape, replacing the anticodon stem-loop with SmpB. tmRNA is encoded by the ssrA gene; the 2 termini fold to resemble tRNA(Ala) and it encodes a 'tag peptide', a short internal open reading frame. During trans-translation Ala-aminoacylated tmRNA acts like a tRNA, entering the A-site of stalled ribosomes, displacing the stalled mRNA. The ribosome then switches to translate the ORF on the tmRNA; the nascent peptide is terminated with the 'tag peptide' encoded by the tmRNA and targeted for degradation. The ribosome is freed to recommence translation, which seems to be the essential function of trans-translation. In Mycobacterium ulcerans (strain Agy99), this protein is SsrA-binding protein.